We begin with the raw amino-acid sequence, 436 residues long: Serine--tRNA ligase (436 aa).

241–243 is an L-serine binding site; sequence TSE. 272–274 contacts ATP; sequence RAE. Glutamate 295 contacts L-serine. ATP is bound at residue 359 to 362; it reads EISS. L-serine is bound at residue serine 395.

It belongs to the class-II aminoacyl-tRNA synthetase family. Type-1 seryl-tRNA synthetase subfamily. Homodimer. The tRNA molecule binds across the dimer.

The protein resides in the cytoplasm. It catalyses the reaction tRNA(Ser) + L-serine + ATP = L-seryl-tRNA(Ser) + AMP + diphosphate + H(+). The catalysed reaction is tRNA(Sec) + L-serine + ATP = L-seryl-tRNA(Sec) + AMP + diphosphate + H(+). The protein operates within aminoacyl-tRNA biosynthesis; selenocysteinyl-tRNA(Sec) biosynthesis; L-seryl-tRNA(Sec) from L-serine and tRNA(Sec): step 1/1. Functionally, catalyzes the attachment of serine to tRNA(Ser). Is also able to aminoacylate tRNA(Sec) with serine, to form the misacylated tRNA L-seryl-tRNA(Sec), which will be further converted into selenocysteinyl-tRNA(Sec). The protein is Serine--tRNA ligase of Beijerinckia indica subsp. indica (strain ATCC 9039 / DSM 1715 / NCIMB 8712).